The chain runs to 426 residues: UPF0329 protein ECU06_0040 (426 aa).

Positions arginine 136–alanine 172 are enriched in basic and acidic residues. The disordered stretch occupies residues arginine 136–arginine 230. Basic residues predominate over residues lysine 220–arginine 230.

The protein belongs to the UPF0329 family.

In Encephalitozoon cuniculi (strain GB-M1) (Microsporidian parasite), this protein is UPF0329 protein ECU06_0040.